Reading from the N-terminus, the 884-residue chain is Translation initiation factor IF-2 (884 aa).

Disordered regions lie at residues 42-62 (DVQK…QEEV) and 123-254 (EPKG…GGKK). A compositionally biased stretch (basic and acidic residues) spans 194–212 (PAERREVVIPPKRKMEERA). Positions 234–248 (EPETPAGGAPGAKKG) are enriched in low complexity. The 170-residue stretch at 384-553 (KRPPVVTIMG…LLQADVMDLK (170 aa)) folds into the tr-type G domain. The G1 stretch occupies residues 393 to 400 (GHVDHGKT). 393–400 (GHVDHGKT) contacts GTP. The G2 stretch occupies residues 418 to 422 (GITQH). A G3 region spans residues 439–442 (DTPG). Residues 439 to 443 (DTPGH) and 493 to 496 (NKID) each bind GTP. The interval 493 to 496 (NKID) is G4. Residues 529–531 (SAK) form a G5 region.

Belongs to the TRAFAC class translation factor GTPase superfamily. Classic translation factor GTPase family. IF-2 subfamily.

It localises to the cytoplasm. Functionally, one of the essential components for the initiation of protein synthesis. Protects formylmethionyl-tRNA from spontaneous hydrolysis and promotes its binding to the 30S ribosomal subunits. Also involved in the hydrolysis of GTP during the formation of the 70S ribosomal complex. This is Translation initiation factor IF-2 from Geobacter metallireducens (strain ATCC 53774 / DSM 7210 / GS-15).